The following is a 475-amino-acid chain: Ribulose bisphosphate carboxylase large chain (475 aa).

A propeptide spanning residues 1 to 2 (MS) is cleaved from the precursor. At Pro3 the chain carries N-acetylproline. N6,N6,N6-trimethyllysine is present on Lys14. Positions 123 and 173 each coordinate substrate. The active-site Proton acceptor is the Lys175. Residue Lys177 participates in substrate binding. Lys201, Asp203, and Glu204 together coordinate Mg(2+). Lys201 carries the post-translational modification N6-carboxylysine. His294 (proton acceptor) is an active-site residue. 3 residues coordinate substrate: Arg295, His327, and Ser379.

Belongs to the RuBisCO large chain family. Type I subfamily. Heterohexadecamer of 8 large chains and 8 small chains; disulfide-linked. The disulfide link is formed within the large subunit homodimers. It depends on Mg(2+) as a cofactor. Post-translationally, the disulfide bond which can form in the large chain dimeric partners within the hexadecamer appears to be associated with oxidative stress and protein turnover.

It localises to the plastid. The protein resides in the chloroplast. The enzyme catalyses 2 (2R)-3-phosphoglycerate + 2 H(+) = D-ribulose 1,5-bisphosphate + CO2 + H2O. It carries out the reaction D-ribulose 1,5-bisphosphate + O2 = 2-phosphoglycolate + (2R)-3-phosphoglycerate + 2 H(+). Its function is as follows. RuBisCO catalyzes two reactions: the carboxylation of D-ribulose 1,5-bisphosphate, the primary event in carbon dioxide fixation, as well as the oxidative fragmentation of the pentose substrate in the photorespiration process. Both reactions occur simultaneously and in competition at the same active site. The protein is Ribulose bisphosphate carboxylase large chain of Zygnema circumcarinatum (Green alga).